A 92-amino-acid polypeptide reads, in one-letter code: Small ribosomal subunit protein uS19 (92 aa).

This sequence belongs to the universal ribosomal protein uS19 family.

Functionally, protein S19 forms a complex with S13 that binds strongly to the 16S ribosomal RNA. This is Small ribosomal subunit protein uS19 from Chromobacterium violaceum (strain ATCC 12472 / DSM 30191 / JCM 1249 / CCUG 213 / NBRC 12614 / NCIMB 9131 / NCTC 9757 / MK).